A 442-amino-acid chain; its full sequence is Histidinol dehydrogenase (442 aa).

NAD(+)-binding residues include Tyr138, Gln196, and Asn219. Substrate-binding residues include Ser245, Gln267, and His270. Zn(2+) contacts are provided by Gln267 and His270. Active-site proton acceptor residues include Glu334 and His335. Positions 335, 368, 422, and 427 each coordinate substrate. Asp368 lines the Zn(2+) pocket. Zn(2+) is bound at residue His427.

This sequence belongs to the histidinol dehydrogenase family. In terms of assembly, homodimer. The cofactor is Zn(2+).

It carries out the reaction L-histidinol + 2 NAD(+) + H2O = L-histidine + 2 NADH + 3 H(+). It participates in amino-acid biosynthesis; L-histidine biosynthesis; L-histidine from 5-phospho-alpha-D-ribose 1-diphosphate: step 9/9. Functionally, catalyzes the sequential NAD-dependent oxidations of L-histidinol to L-histidinaldehyde and then to L-histidine. The chain is Histidinol dehydrogenase from Pectobacterium atrosepticum (strain SCRI 1043 / ATCC BAA-672) (Erwinia carotovora subsp. atroseptica).